The chain runs to 488 residues: Ribulose bisphosphate carboxylase large chain 1 (488 aa).

2 residues coordinate substrate: Asn-128 and Thr-178. Lys-180 serves as the catalytic Proton acceptor. Residue Lys-182 coordinates substrate. 3 residues coordinate Mg(2+): Lys-206, Asp-208, and Glu-209. An N6-carboxylysine modification is found at Lys-206. His-298 (proton acceptor) is an active-site residue. Positions 299, 331, and 383 each coordinate substrate.

This sequence belongs to the RuBisCO large chain family. Type I subfamily. In terms of assembly, heterohexadecamer of 8 large chains and 8 small chains. Requires Mg(2+) as cofactor.

The enzyme catalyses 2 (2R)-3-phosphoglycerate + 2 H(+) = D-ribulose 1,5-bisphosphate + CO2 + H2O. The catalysed reaction is D-ribulose 1,5-bisphosphate + O2 = 2-phosphoglycolate + (2R)-3-phosphoglycerate + 2 H(+). Functionally, ruBisCO catalyzes two reactions: the carboxylation of D-ribulose 1,5-bisphosphate, the primary event in carbon dioxide fixation, as well as the oxidative fragmentation of the pentose substrate. Both reactions occur simultaneously and in competition at the same active site. The protein is Ribulose bisphosphate carboxylase large chain 1 of Methylibium petroleiphilum (strain ATCC BAA-1232 / LMG 22953 / PM1).